Consider the following 752-residue polypeptide: Complement C2 (752 aa).

An N-terminal signal peptide occupies residues M1–S20. Sushi domains lie at P22–P86, V87–N146, and G149–Q206. 6 disulfides stabilise this stretch: C24/C64, C51/C84, C89/C131, C117/C144, C151/C191, and C177/C204. The N-linked (GlcNAc...) asparagine glycan is linked to N29. N-linked (GlcNAc...) asparagine glycosylation occurs at N112. Residues N254–M452 form the VWFA domain. The MIDAS-like motif signature appears at D260 to S264. 2 residues coordinate Mg(2+): S262 and S264. 2 N-linked (GlcNAc...) asparagine glycosylation sites follow: N290 and N333. Position 337 (T337) interacts with Mg(2+). 3 cysteine pairs are disulfide-bonded: C463-C581, C492-C508, and C584-C600. In terms of domain architecture, Peptidase S1 spans G464–G744. Residues N467 and N471 are each glycosylated (N-linked (GlcNAc...) asparagine). Active-site charge relay system residues include H507 and D561. N621 carries N-linked (GlcNAc...) asparagine glycosylation. Intrachain disulfides connect C638-C665 and C675-C705. S679 (charge relay system) is an active-site residue.

The protein belongs to the peptidase S1 family. As to quaternary structure, serine protease component of the C3 convertase, also named C4bC2b, composed of the serine protease complement C2b and complement C4b. Serine protease component of the C5 convertase, also named C4bC2bC3b, composed of the serine protease complement C2b, complement C3b, as well as complement C4b. Mg(2+) is required as a cofactor. It depends on Mn(2+) as a cofactor. Post-translationally, cleaved and activated by different proteases depending on the complement pathway to generate complement C2a and serine protease complement C2b chains. Cleaved and activated by C1S following activation by the classical complement system. Cleaved and activated by MASP2 following activation by the lectin complement system. Cleaved and activated by GZMK following activation by the GZMK complement system.

It localises to the secreted. It is found in the cell surface. It catalyses the reaction Selective cleavage of Arg-|-Ser bond in complement component C3 alpha-chain to form C3a and C3b, and Arg-|-Xaa bond in complement component C5 alpha-chain to form C5a and C5b.. Its function is as follows. Precursor of the catalytic component of the C3 and C5 convertase complexes, which are part of the complement pathway, a cascade of proteins that leads to phagocytosis and breakdown of pathogens and signaling that strengthens the adaptive immune system. Component C2 is part of the classical, lectin and GZMK complement systems. Functionally, catalytic component of the complement C3 and C5 convertase complexes. Following complement activation, recruited to the surface of pathogens by complement C4b opsonin to form the C3 convertase, or C3b and C4b opsonins to form the C5 convertase. As part of the C3 convertase, cleaves and activate C3 into C3a anaphylatoxin and C3b opsonin, the next components of the complement pathways. As part of the C5 convertase, cleaves and activate C5 into C5a anaphylatoxin and C5b component of the membrane attack complex. The sequence is that of Complement C2 from Pongo pygmaeus (Bornean orangutan).